The sequence spans 271 residues: Glutamate 5-kinase (271 aa).

An ATP-binding site is contributed by Lys-14. Residues Ser-54, Asp-141, and Asn-157 each coordinate substrate. ATP contacts are provided by residues 177–178 (SD) and 219–225 (TGGMSSK).

Belongs to the glutamate 5-kinase family.

It localises to the cytoplasm. The catalysed reaction is L-glutamate + ATP = L-glutamyl 5-phosphate + ADP. It participates in amino-acid biosynthesis; L-proline biosynthesis; L-glutamate 5-semialdehyde from L-glutamate: step 1/2. In terms of biological role, catalyzes the transfer of a phosphate group to glutamate to form L-glutamate 5-phosphate. The protein is Glutamate 5-kinase of Enterococcus faecalis (strain ATCC 700802 / V583).